Reading from the N-terminus, the 778-residue chain is uncharacterized protein (778 aa).

The region spanning 1-92 (MSFVIAVPEA…GARSYVVAEA (92 aa)) is the PE domain. Disordered regions lie at residues 125–163 (ADGTGAPGGPGGLLLGNGGNGGSGAPGQPGGAGGDAGLI), 372–510 (TGLA…GDAF), and 718–778 (QGGL…GADG). Composition is skewed to gly residues over residues 402-429 (NQTGGNGGPGPAGGVGEAGGVGGQGGLG), 436-510 (DGTG…GDAF), and 718-763 (QGGL…GSSG).

It belongs to the mycobacterial PE family. PGRS subfamily.

This is an uncharacterized protein from Mycobacterium tuberculosis (strain CDC 1551 / Oshkosh).